Consider the following 477-residue polypeptide: Mannitol 2-dehydrogenase (477 aa).

19-30 (IVHIGVGNFHRA) contributes to the NAD(+) binding site.

Belongs to the mannitol dehydrogenase family. In terms of assembly, monomer.

It carries out the reaction D-mannitol + NAD(+) = D-fructose + NADH + H(+). This Cereibacter sphaeroides (Rhodobacter sphaeroides) protein is Mannitol 2-dehydrogenase (mtlK).